Reading from the N-terminus, the 260-residue chain is Cytochrome c oxidase subunit 3 (260 aa).

Topologically, residues 1 to 15 (MTHQTHAYHMVNPSP) are mitochondrial matrix. A helical membrane pass occupies residues 16–34 (WPLTGALSALLMTSGLAMW). The Mitochondrial intermembrane segment spans residues 35–40 (FHFNST). The chain crosses the membrane as a helical span at residues 41–66 (ALLMIGLTTNMLTMYQWWRDIIREST). The Mitochondrial matrix segment spans residues 67 to 72 (FQGHHT). A helical transmembrane segment spans residues 73–105 (PAVQKGLRYGMILFIISEVLFFTGFFWAFYHSS). Residues 106 to 128 (LAPTPELGGCWPPTGIHPLNPLE) are Mitochondrial intermembrane-facing. Residues 129–152 (VPLLNTSVLLASGVSITWAHHSLM) form a helical membrane-spanning segment. Residues 153–155 (EGD) are Mitochondrial matrix-facing. Residues 156-183 (RNHMLQALFITITLGVYFTLLQASEYYE) form a helical membrane-spanning segment. Over 184–190 (APFTISD) the chain is Mitochondrial intermembrane. Residues 191-223 (GVYGSTFFVATGFHGLHVIIGSTFLIVCFFRQL) traverse the membrane as a helical segment. At 224-232 (KFHFTSNHH) the chain is on the mitochondrial matrix side. A helical transmembrane segment spans residues 233–256 (FGFEAAAWYWHFVDVVWLFLYVSI). At 257 to 260 (YWWG) the chain is on the mitochondrial intermembrane side.

The protein belongs to the cytochrome c oxidase subunit 3 family. Component of the cytochrome c oxidase (complex IV, CIV), a multisubunit enzyme composed of 14 subunits. The complex is composed of a catalytic core of 3 subunits MT-CO1, MT-CO2 and MT-CO3, encoded in the mitochondrial DNA, and 11 supernumerary subunits COX4I, COX5A, COX5B, COX6A, COX6B, COX6C, COX7A, COX7B, COX7C, COX8 and NDUFA4, which are encoded in the nuclear genome. The complex exists as a monomer or a dimer and forms supercomplexes (SCs) in the inner mitochondrial membrane with NADH-ubiquinone oxidoreductase (complex I, CI) and ubiquinol-cytochrome c oxidoreductase (cytochrome b-c1 complex, complex III, CIII), resulting in different assemblies (supercomplex SCI(1)III(2)IV(1) and megacomplex MCI(2)III(2)IV(2)).

Its subcellular location is the mitochondrion inner membrane. The enzyme catalyses 4 Fe(II)-[cytochrome c] + O2 + 8 H(+)(in) = 4 Fe(III)-[cytochrome c] + 2 H2O + 4 H(+)(out). Component of the cytochrome c oxidase, the last enzyme in the mitochondrial electron transport chain which drives oxidative phosphorylation. The respiratory chain contains 3 multisubunit complexes succinate dehydrogenase (complex II, CII), ubiquinol-cytochrome c oxidoreductase (cytochrome b-c1 complex, complex III, CIII) and cytochrome c oxidase (complex IV, CIV), that cooperate to transfer electrons derived from NADH and succinate to molecular oxygen, creating an electrochemical gradient over the inner membrane that drives transmembrane transport and the ATP synthase. Cytochrome c oxidase is the component of the respiratory chain that catalyzes the reduction of oxygen to water. Electrons originating from reduced cytochrome c in the intermembrane space (IMS) are transferred via the dinuclear copper A center (CU(A)) of subunit 2 and heme A of subunit 1 to the active site in subunit 1, a binuclear center (BNC) formed by heme A3 and copper B (CU(B)). The BNC reduces molecular oxygen to 2 water molecules using 4 electrons from cytochrome c in the IMS and 4 protons from the mitochondrial matrix. This chain is Cytochrome c oxidase subunit 3 (MT-CO3), found in Bos mutus grunniens (Wild yak).